A 475-amino-acid polypeptide reads, in one-letter code: Ornithine aminotransferase, mitochondrial (475 aa).

A mitochondrion-targeting transit peptide spans 1 to 16 (MAATTRRLLYYVSKRF). The segment at 23 to 43 (RSYGGLPQSNSKSPPSSSQRL) is disordered. Residues 29–41 (PQSNSKSPPSSSQ) show a composition bias toward low complexity. Pyridoxal 5'-phosphate-binding positions include 142–143 (GA) and F177. Residue R180 coordinates L-ornithine. 265–268 (DEVQ) is a binding site for pyridoxal 5'-phosphate. Residue K294 is modified to N6-(pyridoxal phosphate)lysine. S323 is a binding site for L-ornithine. Position 324 (T324) interacts with pyridoxal 5'-phosphate.

This sequence belongs to the class-III pyridoxal-phosphate-dependent aminotransferase family. In terms of assembly, homotetramer. It depends on pyridoxal 5'-phosphate as a cofactor.

The protein resides in the mitochondrion matrix. It carries out the reaction a 2-oxocarboxylate + L-ornithine = L-glutamate 5-semialdehyde + an L-alpha-amino acid. It participates in amino-acid biosynthesis; L-proline biosynthesis; L-glutamate 5-semialdehyde from L-ornithine: step 1/1. In terms of biological role, mediates degradation of arginine for nitrogen recycling. Plays a role in non-host disease resistance by regulating pyrroline-5-carboxylate metabolism-induced hypersensitive response. This chain is Ornithine aminotransferase, mitochondrial, found in Arabidopsis thaliana (Mouse-ear cress).